A 211-amino-acid polypeptide reads, in one-letter code: Superoxide dismutase [Mn], mitochondrial (211 aa).

The transit peptide at 1–24 directs the protein to the mitochondrion; the sequence is MLCRAVCSASRRLAPALGILGVRQ. His-50 provides a ligand contact to Mn(2+). Residue Tyr-58 is modified to 3'-nitrotyrosine. 2 positions are modified to N6-acetyllysine; alternate: Lys-68 and Lys-75. Residues Lys-68 and Lys-75 each carry the N6-succinyllysine; alternate modification. Position 98 (His-98) interacts with Mn(2+). Lys-114 carries the N6-acetyllysine modification. N6-acetyllysine; alternate occurs at positions 122 and 130. N6-succinyllysine; alternate is present on residues Lys-122 and Lys-130. 2 residues coordinate Mn(2+): Asp-183 and His-187. The residue at position 202 (Lys-202) is an N6-acetyllysine.

It belongs to the iron/manganese superoxide dismutase family. In terms of assembly, homotetramer. Mn(2+) is required as a cofactor. Post-translationally, nitrated under oxidative stress. Nitration coupled with oxidation inhibits the catalytic activity. In terms of processing, acetylation at Lys-122 decreases enzymatic activity. Deacetylated by SIRT3 upon exposure to ionizing radiations or after long fasting. Polyubiquitinated; leading to proteasomal degradation. Deubiquitinated by USP36 which increases protein stability.

The protein localises to the mitochondrion matrix. It carries out the reaction 2 superoxide + 2 H(+) = H2O2 + O2. In terms of biological role, destroys superoxide anion radicals which are normally produced within the cells and which are toxic to biological systems. This chain is Superoxide dismutase [Mn], mitochondrial (SOD2), found in Cavia porcellus (Guinea pig).